The primary structure comprises 361 residues: Replication-associated protein (361 aa).

The disordered stretch occupies residues 1-31 (MSSLPVSESEGEGSGTSVQVPSRGGQVTPGE). One can recognise a CRESS-DNA virus Rep endonuclease domain in the interval 35 to 138 (SLRTKHVFLT…PESSWEFGKF (104 aa)). An RCR-1 motif is present at residues 42–45 (FLTY). The a divalent metal cation site is built by glutamate 76, histidine 84, and histidine 86. The RCR-2 motif lies at 84 to 86 (HLH). The active-site For DNA cleavage activity is tyrosine 124. The RCR-3 signature appears at 124 to 127 (YCMK). The interval 192 to 204 (SANALFPDPPQTY) is oligomerization. 243–250 (GPTRTGKT) is a binding site for ATP. The segment at 266–285 (VNFLEEWNCQAQFNIIDDIP) is transactivation. The Nuclear localization signal signature appears at 307–317 (KYGKKKRIPNG).

This sequence belongs to the geminiviridae Rep protein family. As to quaternary structure, homooligomer. Rep binds to repeated DNA motifs (iterons). Forms the O-complex, which is a Rep-DNA complex involved in the initiation of RCR. Part of the C- and V-complexes which are RepA-Rep-DNA complexes involved in the c-sense and v-sense transcription. It depends on Mg(2+) as a cofactor. The cofactor is Mn(2+).

It is found in the host nucleus. Its function is as follows. Essential for the replication of viral ssDNA. The closed circular ssDNA genome is first converted to a superhelical dsDNA. Rep binds a specific region at the genome origin of replication. It introduces an endonucleolytic nick within the conserved sequence 5'-TAATATTAC-3' in the intergenic region of the genome present in all geminiviruses, thereby initiating the rolling circle replication (RCR). Following cleavage, binds covalently to the 5'-phosphate of DNA as a tyrosyl ester. The cleavage gives rise to a free 3'-OH that serves as a primer for the cellular DNA polymerase. The polymerase synthesizes the (+) strand DNA by rolling circle mechanism. After one round of replication, a Rep-catalyzed nucleotidyl transfer reaction releases a circular single-stranded virus genome, thereby terminating the replication. Displays origin-specific DNA cleavage, nucleotidyl transferase, ATPase and helicase activities. Acts as an inhibitor of C-sense gene transcription. This chain is Replication-associated protein, found in Avena sativa (Oat).